A 206-amino-acid polypeptide reads, in one-letter code: Molybdopterin synthase catalytic subunit (206 aa).

Positions 1 to 23 (MATQQPTQTDNSAQAQPPQTNPA) are enriched in polar residues. Positions 1-27 (MATQQPTQTDNSAQAQPPQTNPAKPTE) are disordered. Residues 131-132 (HR), Lys147, and 154-156 (KRE) contribute to the substrate site. The span at 177-188 (KVDEPRIGKGEV) shows a compositional bias: basic and acidic residues. The interval 177-206 (KVDEPRIGKGEVDEKEDEGDSGNGGNDRKS) is disordered. A compositionally biased stretch (gly residues) spans 197–206 (SGNGGNDRKS).

It belongs to the MoaE family. MOCS2B subfamily. As to quaternary structure, heterotetramer; composed of 2 small (MOCS2A) and 2 large (MOCS2B) subunits.

The protein localises to the cytoplasm. It catalyses the reaction 2 [molybdopterin-synthase sulfur-carrier protein]-C-terminal-Gly-aminoethanethioate + cyclic pyranopterin phosphate + H2O = molybdopterin + 2 [molybdopterin-synthase sulfur-carrier protein]-C-terminal Gly-Gly + 2 H(+). The protein operates within cofactor biosynthesis; molybdopterin biosynthesis. Its function is as follows. Catalytic subunit of the molybdopterin synthase complex, a complex that catalyzes the conversion of precursor Z into molybdopterin. Acts by mediating the incorporation of 2 sulfur atoms from thiocarboxylated MOCS2A into precursor Z to generate a dithiolene group. In Neurospora crassa (strain ATCC 24698 / 74-OR23-1A / CBS 708.71 / DSM 1257 / FGSC 987), this protein is Molybdopterin synthase catalytic subunit (nit-8).